A 380-amino-acid chain; its full sequence is Cytochrome b (380 aa).

4 helical membrane-spanning segments follow: residues 34–54 (FGSL…LLAT), 78–99 (WLIR…YLHI), 114–134 (WNTG…GYVL), and 179–199 (FFAL…IHLT). Heme b-binding residues include His84 and His98. Heme b contacts are provided by His183 and His197. An a ubiquinone-binding site is contributed by His202. 4 helical membrane-spanning segments follow: residues 227–247 (LKDI…ALFS), 289–309 (LGGV…PLLH), 321–341 (LSQL…WVGS), and 348–368 (FIII…LLFP).

Belongs to the cytochrome b family. The cytochrome bc1 complex contains 11 subunits: 3 respiratory subunits (MT-CYB, CYC1 and UQCRFS1), 2 core proteins (UQCRC1 and UQCRC2) and 6 low-molecular weight proteins (UQCRH/QCR6, UQCRB/QCR7, UQCRQ/QCR8, UQCR10/QCR9, UQCR11/QCR10 and a cleavage product of UQCRFS1). This cytochrome bc1 complex then forms a dimer. The cofactor is heme b.

The protein resides in the mitochondrion inner membrane. In terms of biological role, component of the ubiquinol-cytochrome c reductase complex (complex III or cytochrome b-c1 complex) that is part of the mitochondrial respiratory chain. The b-c1 complex mediates electron transfer from ubiquinol to cytochrome c. Contributes to the generation of a proton gradient across the mitochondrial membrane that is then used for ATP synthesis. This chain is Cytochrome b (MT-CYB), found in Cepphus grylle (Black guillemot).